We begin with the raw amino-acid sequence, 323 residues long: Probable cell division protein WhiA (323 aa).

The H-T-H motif DNA-binding region spans 275 to 309; that stretch reads TLKELGEMLTTGQVSKSGINHRLRKLDQIAERLRS.

This sequence belongs to the WhiA family.

Involved in cell division and chromosome segregation. The sequence is that of Probable cell division protein WhiA from Listeria welshimeri serovar 6b (strain ATCC 35897 / DSM 20650 / CCUG 15529 / CIP 8149 / NCTC 11857 / SLCC 5334 / V8).